The chain runs to 137 residues: Ribosome-binding factor A (137 aa).

It belongs to the RbfA family. Monomer. Binds 30S ribosomal subunits, but not 50S ribosomal subunits or 70S ribosomes.

It is found in the cytoplasm. Its function is as follows. One of several proteins that assist in the late maturation steps of the functional core of the 30S ribosomal subunit. Associates with free 30S ribosomal subunits (but not with 30S subunits that are part of 70S ribosomes or polysomes). Required for efficient processing of 16S rRNA. May interact with the 5'-terminal helix region of 16S rRNA. This chain is Ribosome-binding factor A, found in Trichodesmium erythraeum (strain IMS101).